The chain runs to 818 residues: Auxin response factor 12 (818 aa).

The segment covering 1-10 (MSSSSAASIG) has biased composition (low complexity). Residues 1–24 (MSSSSAASIGPPQPPPPPAPPEEE) form a disordered region. Over residues 11–20 (PPQPPPPPAP) the composition is skewed to pro residues. A DNA-binding region (TF-B3) is located at residues 135–237 (FCKTLTASDT…QLLLGIRRAS (103 aa)). 2 disordered regions span residues 526-565 (NDQK…FSDP) and 629-648 (GSVL…NKIG). Over residues 629–640 (GSVLHNSPTSKD) the composition is skewed to polar residues. Residues 719 to 803 (RTFVKVYKSG…WYIKILSPED (85 aa)) form the PB1 domain.

This sequence belongs to the ARF family. Homodimers and heterodimers. As to expression, expressed in roots, culms, leaves and young panicles.

It localises to the nucleus. Functionally, auxin response factors (ARFs) are transcriptional factors that bind specifically to the DNA sequence 5'-TGTCTC-3' found in the auxin-responsive promoter elements (AuxREs). The polypeptide is Auxin response factor 12 (ARF12) (Oryza sativa subsp. japonica (Rice)).